The sequence spans 401 residues: Cysteine desulfurase CsdA (401 aa).

Lysine 222 is modified (N6-(pyridoxal phosphate)lysine). Catalysis depends on cysteine 358, which acts as the Cysteine persulfide intermediate.

The protein belongs to the class-V pyridoxal-phosphate-dependent aminotransferase family. Csd subfamily. In terms of assembly, homodimer. Forms a heterodimer with CsdE. Requires pyridoxal 5'-phosphate as cofactor.

The catalysed reaction is (sulfur carrier)-H + L-cysteine = (sulfur carrier)-SH + L-alanine. It catalyses the reaction L-selenocysteine + AH2 = hydrogenselenide + L-alanine + A + H(+). The enzyme catalyses 3-sulfino-L-alanine + H2O = sulfite + L-alanine + H(+). Its activity is regulated as follows. Cysteine desulfurase activity is increased 2-fold in the presence of CsdE. Its function is as follows. Catalyzes the removal of elemental sulfur and selenium atoms from L-cysteine, L-cystine, L-selenocysteine, and L-selenocystine to produce L-alanine, and transiently retains the released sulfur atom on a cysteine residue, in the form of a persulfide. Can also desulfinate L-cysteine sulfinate (3-sulfino-L-alanine), which is the best substrate of the enzyme. Functions as a selenium delivery protein in the pathway for the biosynthesis of selenophosphate. Seems to participate in Fe/S biogenesis by recruiting the SufBCD-SufE proteins. Transfers sulfur to CsdE that increases the cysteine desulfurase activity of CsdA. Can also transfer sulfur directly to TcdA/CsdL in vitro. Appears to support the function of TcdA in the generation of cyclic threonylcarbamoyladenosine at position 37 (ct(6)A37) in tRNAs that read codons beginning with adenine. This is Cysteine desulfurase CsdA (csdA) from Escherichia coli (strain K12).